The following is an 80-amino-acid chain: MSFEVLEKLEAKIQTAVDTIALLQMEVEELKEEKQQLQNEAQELREAREALEQRAQQVQQEHAAWQERIRSLLGKMEDVE.

Residues Phe3–Glu80 are a coiled coil.

This sequence belongs to the ZapB family. In terms of assembly, homodimer. The ends of the coiled-coil dimer bind to each other, forming polymers. Interacts with FtsZ.

It is found in the cytoplasm. Non-essential, abundant cell division factor that is required for proper Z-ring formation. It is recruited early to the divisome by direct interaction with FtsZ, stimulating Z-ring assembly and thereby promoting cell division earlier in the cell cycle. Its recruitment to the Z-ring requires functional FtsA or ZipA. In Vibrio cholerae serotype O1 (strain ATCC 39541 / Classical Ogawa 395 / O395), this protein is Cell division protein ZapB.